Reading from the N-terminus, the 372-residue chain is Chorismate synthase (372 aa).

NADP(+) contacts are provided by Arg48 and Arg54. FMN contacts are provided by residues 125–127 (RSS), 238–239 (NA), Gly278, 293–297 (KPTSS), and Arg319.

Belongs to the chorismate synthase family. In terms of assembly, homotetramer. FMNH2 serves as cofactor.

The enzyme catalyses 5-O-(1-carboxyvinyl)-3-phosphoshikimate = chorismate + phosphate. The protein operates within metabolic intermediate biosynthesis; chorismate biosynthesis; chorismate from D-erythrose 4-phosphate and phosphoenolpyruvate: step 7/7. Catalyzes the anti-1,4-elimination of the C-3 phosphate and the C-6 proR hydrogen from 5-enolpyruvylshikimate-3-phosphate (EPSP) to yield chorismate, which is the branch point compound that serves as the starting substrate for the three terminal pathways of aromatic amino acid biosynthesis. This reaction introduces a second double bond into the aromatic ring system. This is Chorismate synthase from Xylella fastidiosa (strain M23).